Reading from the N-terminus, the 423-residue chain is Innexin eat-5 (423 aa).

Transmembrane regions (helical) follow at residues 25–41, 102–122, 277–297, and 341–361; these read YYYS…TITA, PFIM…WSML, IFLF…FDSI, and HSIL…IILL.

The protein belongs to the pannexin family. Heterooligomer of eat-5 and another innexin. In terms of tissue distribution, expressed in pharyngeal muscles.

It localises to the cell membrane. The protein localises to the cell junction. Its subcellular location is the gap junction. In terms of biological role, structural component of the gap junctions. Required for synchronized pharyngeal muscle contractions. This Caenorhabditis elegans protein is Innexin eat-5 (eat-5).